The primary structure comprises 107 residues: MTQPDMSQILAQAQQMQAQLQAAQQEILASSVVGDAANGLVTVTMSGSGEVTAVNIDPKVVDPEDVETLQDLVQGAFLDAHKKVADLAQEKMGPLSQGFGGDMGSLF.

The protein belongs to the YbaB/EbfC family. In terms of assembly, homodimer.

The protein resides in the cytoplasm. It is found in the nucleoid. Its function is as follows. Binds to DNA and alters its conformation. May be involved in regulation of gene expression, nucleoid organization and DNA protection. The protein is Nucleoid-associated protein CE0210 of Corynebacterium efficiens (strain DSM 44549 / YS-314 / AJ 12310 / JCM 11189 / NBRC 100395).